A 652-amino-acid chain; its full sequence is Leucine-rich repeat-containing protein 4 (652 aa).

Residues 1–40 form the signal peptide; sequence MKLLWQVTVHHTWNAVLLPVVYLTAQVWILCAAIAAAASA. The Extracellular segment spans residues 1-526; sequence MKLLWQVTVH…SLDEVMKTTK (526 aa). In terms of domain architecture, LRRNT spans 41-74; that stretch reads GPQNCPSVCSCSNQFSKVVCTRRGLSEVPQGIPS. Intrachain disulfides connect Cys45–Cys51 and Cys49–Cys60. LRR repeat units follow at residues 75–96, 99–120, 123–144, 147–168, 171–193, 196–217, 218–239, 242–263, and 266–287; these read NTRY…TFRH, HLEV…AFNG, SLNT…AFEY, KLRE…AFNR, SLMR…AFEG, NLKY…TPLV, GLEE…SFHG, SLKK…AFDG, and SLVE…LFTP. Residues 299 to 351 enclose the LRRCT domain; it reads NPWNCDCDILWLAWWLREYIPTNSTCCGRCHAPMHMRGRYLVEVDQASFQCSA. 2 disulfides stabilise this stretch: Cys303/Cys328 and Cys305/Cys349. Asn321 and Asn362 each carry an N-linked (GlcNAc...) asparagine glycan. Residues 352–441 form the Ig-like C2-type domain; that stretch reads PFIMDAPRDL…SNASAYLNVS (90 aa). The cysteines at positions 373 and 423 are disulfide-linked. Residues 527–547 traverse the membrane as a helical segment; it reads IIIGCFVAVTLLAAAMLIVFY. The Cytoplasmic segment spans residues 548–652; the sequence is KLRKRHQQRS…TKDKVQETQI (105 aa).

Interacts (via LRR repeats) with NTNG2. Interacts with DLG4. Found in a complex with NMDA receptors. Post-translationally, N-glycosylated. In terms of tissue distribution, mainly expressed in the brain. Expression is concentrated in the olfactory bulb, cortex, hippocampus and cerebellum in adult brain. Detected both embryonically and postnatally with stronger expression in postnatal stages.

The protein resides in the membrane. Its subcellular location is the postsynaptic cell membrane. Synaptic adhesion protein. Regulates the formation of exitatory synapses through the recruitment of pre-and-postsynaptic proteins. Organize the lamina/pathway-specific differentiation of dendrites. Plays an important role for auditory synaptic responses. Involved in the suppression of glioma. The sequence is that of Leucine-rich repeat-containing protein 4 (Lrrc4) from Rattus norvegicus (Rat).